A 294-amino-acid chain; its full sequence is Large ribosomal subunit protein uL2 (294 aa).

Disordered regions lie at residues 1–37 and 228–294; these read MGIR…RPEK and GSVM…RAAQ. The segment covering 23-37 has biased composition (basic and acidic residues); it reads ELSRDENGKRPRPEK. Positions 264 to 285 are enriched in basic residues; the sequence is KTRKRNKPSNKFIVRGRRRGGR.

This sequence belongs to the universal ribosomal protein uL2 family. As to quaternary structure, part of the 50S ribosomal subunit. Forms a bridge to the 30S subunit in the 70S ribosome.

One of the primary rRNA binding proteins. Required for association of the 30S and 50S subunits to form the 70S ribosome, for tRNA binding and peptide bond formation. It has been suggested to have peptidyltransferase activity; this is somewhat controversial. Makes several contacts with the 16S rRNA in the 70S ribosome. In Synechococcus sp. (strain JA-2-3B'a(2-13)) (Cyanobacteria bacterium Yellowstone B-Prime), this protein is Large ribosomal subunit protein uL2.